Here is a 252-residue protein sequence, read N- to C-terminus: Glucosamine-6-phosphate deaminase (252 aa).

Residue aspartate 67 is the Proton acceptor; for enolization step of the active site. Asparagine 137 functions as the For ring-opening step in the catalytic mechanism. Residue histidine 139 is the Proton acceptor; for ring-opening step of the active site. Glutamate 144 functions as the For ring-opening step in the catalytic mechanism.

The protein belongs to the glucosamine/galactosamine-6-phosphate isomerase family. NagB subfamily.

It catalyses the reaction alpha-D-glucosamine 6-phosphate + H2O = beta-D-fructose 6-phosphate + NH4(+). Its pathway is amino-sugar metabolism; N-acetylneuraminate degradation; D-fructose 6-phosphate from N-acetylneuraminate: step 5/5. Functionally, catalyzes the reversible isomerization-deamination of glucosamine 6-phosphate (GlcN6P) to form fructose 6-phosphate (Fru6P) and ammonium ion. This chain is Glucosamine-6-phosphate deaminase, found in Staphylococcus aureus (strain bovine RF122 / ET3-1).